Here is a 181-residue protein sequence, read N- to C-terminus: MTASCRIRRNSNSAQKSTMGWSALSTSDSKVFYRVAWLLGRGKMAEIDAILITDVNGIGTTADDQLAFVSLIADQGETTTVAFGPEIGSRIAASFMAACGQLQHQIATRTGKEERKFKPFAAAGFSVRAGLAADGSNSGMLSISTVAGAEVHFIATERSLRELENQLTLLLEQLRLRSRPN.

This is an uncharacterized protein from Sinorhizobium fredii (strain NBRC 101917 / NGR234).